The chain runs to 322 residues: Beta-ketoacyl-[acyl-carrier-protein] synthase III (322 aa).

Active-site residues include Cys113 and His249. An ACP-binding region spans residues 250-254; the sequence is QANVR. The active site involves Asn279.

This sequence belongs to the thiolase-like superfamily. FabH family. Homodimer.

The protein localises to the cytoplasm. The enzyme catalyses malonyl-[ACP] + acetyl-CoA + H(+) = 3-oxobutanoyl-[ACP] + CO2 + CoA. The protein operates within lipid metabolism; fatty acid biosynthesis. In terms of biological role, catalyzes the condensation reaction of fatty acid synthesis by the addition to an acyl acceptor of two carbons from malonyl-ACP. Catalyzes the first condensation reaction which initiates fatty acid synthesis and may therefore play a role in governing the total rate of fatty acid production. Possesses both acetoacetyl-ACP synthase and acetyl transacylase activities. Its substrate specificity determines the biosynthesis of branched-chain and/or straight-chain of fatty acids. The polypeptide is Beta-ketoacyl-[acyl-carrier-protein] synthase III (Anaplasma marginale (strain St. Maries)).